The primary structure comprises 340 residues: Glycerol-3-phosphate dehydrogenase [NAD(P)+] (340 aa).

3 residues coordinate NADPH: W11, R33, and K110. K110, G144, and S146 together coordinate sn-glycerol 3-phosphate. NADPH is bound at residue A148. K199, D252, S262, R263, and N264 together coordinate sn-glycerol 3-phosphate. K199 (proton acceptor) is an active-site residue. Residue R263 coordinates NADPH. 2 residues coordinate NADPH: V287 and E289.

The protein belongs to the NAD-dependent glycerol-3-phosphate dehydrogenase family.

Its subcellular location is the cytoplasm. The enzyme catalyses sn-glycerol 3-phosphate + NAD(+) = dihydroxyacetone phosphate + NADH + H(+). It catalyses the reaction sn-glycerol 3-phosphate + NADP(+) = dihydroxyacetone phosphate + NADPH + H(+). It participates in membrane lipid metabolism; glycerophospholipid metabolism. Catalyzes the reduction of the glycolytic intermediate dihydroxyacetone phosphate (DHAP) to sn-glycerol 3-phosphate (G3P), the key precursor for phospholipid synthesis. In Polynucleobacter necessarius subsp. necessarius (strain STIR1), this protein is Glycerol-3-phosphate dehydrogenase [NAD(P)+].